Reading from the N-terminus, the 312-residue chain is Aspartate carbamoyltransferase catalytic subunit (312 aa).

Carbamoyl phosphate contacts are provided by R58 and T59. K86 provides a ligand contact to L-aspartate. Carbamoyl phosphate contacts are provided by R108, H136, and Q139. L-aspartate is bound by residues R169 and R223. Residues G264 and P265 each contribute to the carbamoyl phosphate site.

It belongs to the aspartate/ornithine carbamoyltransferase superfamily. ATCase family. As to quaternary structure, heterododecamer (2C3:3R2) of six catalytic PyrB chains organized as two trimers (C3), and six regulatory PyrI chains organized as three dimers (R2).

The enzyme catalyses carbamoyl phosphate + L-aspartate = N-carbamoyl-L-aspartate + phosphate + H(+). It participates in pyrimidine metabolism; UMP biosynthesis via de novo pathway; (S)-dihydroorotate from bicarbonate: step 2/3. Functionally, catalyzes the condensation of carbamoyl phosphate and aspartate to form carbamoyl aspartate and inorganic phosphate, the committed step in the de novo pyrimidine nucleotide biosynthesis pathway. This is Aspartate carbamoyltransferase catalytic subunit from Heliobacterium modesticaldum (strain ATCC 51547 / Ice1).